The following is a 123-amino-acid chain: U9-barytoxin-Tl1a (123 aa).

The N-terminal stretch at 1–18 (MNTMITFLVLFVLTAANG) is a signal peptide. A propeptide spanning residues 19–77 (APEANERKIPEAIHNEDQSLAEMAEELMFFLQQTEFEAPLLQEEEEAEXAEXRNSRERR) is cleaved from the precursor. 3 cysteine pairs are disulfide-bonded: cysteine 78–cysteine 93, cysteine 85–cysteine 98, and cysteine 92–cysteine 112.

This sequence belongs to the neurotoxin 14 (magi-1) family. 05 (ICK-7) subfamily. ICK-7 sub-subfamily. Expressed by the venom gland.

It localises to the secreted. Ion channel inhibitor. The protein is U9-barytoxin-Tl1a of Trittame loki (Brush-footed trapdoor spider).